Here is a 120-residue protein sequence, read N- to C-terminus: NAD(P)H-quinone oxidoreductase subunit 3, chloroplastic (120 aa).

Helical transmembrane passes span 9-29, 64-84, and 88-108; these read IFWA…XISG, MFAL…PWAM, and VLGV…IVGL.

It belongs to the complex I subunit 3 family. NDH is composed of at least 16 different subunits, 5 of which are encoded in the nucleus.

The protein resides in the plastid. The protein localises to the chloroplast thylakoid membrane. It carries out the reaction a plastoquinone + NADH + (n+1) H(+)(in) = a plastoquinol + NAD(+) + n H(+)(out). The catalysed reaction is a plastoquinone + NADPH + (n+1) H(+)(in) = a plastoquinol + NADP(+) + n H(+)(out). In terms of biological role, NDH shuttles electrons from NAD(P)H:plastoquinone, via FMN and iron-sulfur (Fe-S) centers, to quinones in the photosynthetic chain and possibly in a chloroplast respiratory chain. The immediate electron acceptor for the enzyme in this species is believed to be plastoquinone. Couples the redox reaction to proton translocation, and thus conserves the redox energy in a proton gradient. This Eucalyptus globulus subsp. globulus (Tasmanian blue gum) protein is NAD(P)H-quinone oxidoreductase subunit 3, chloroplastic.